The primary structure comprises 217 residues: MADPLYSSLKTVNSTSKVTPESLVFQTKILTPEEAKNVINEKIAFKPLLLVPSLNLEKQGDRKESVASKKRKKLSSKEKKKLQLNVVPKIADYSQFKHLHSMWCSYILEVIAGCTGESLMAKLAKAEYQGAYMQVLRSKSTTRVGLEGICIHESKHMLSLITKENRVVRVPKQDSVMKVIVDVPQRKLVFELYTQHLLLRAGDRSNKRFKSKNTIDL.

The protein belongs to the eukaryotic/archaeal RNase P protein component 1 family.

Its subcellular location is the nucleus. The protein localises to the nucleolus. The catalysed reaction is Endonucleolytic cleavage of RNA, removing 5'-extranucleotides from tRNA precursor.. Its function is as follows. Part of ribonuclease P, a protein complex that generates mature tRNA molecules by cleaving their 5'-ends. This is Probable ribonuclease P protein subunit 1 from Schizosaccharomyces pombe (strain 972 / ATCC 24843) (Fission yeast).